We begin with the raw amino-acid sequence, 157 residues long: Endoribonuclease YbeY (157 aa).

3 residues coordinate Zn(2+): H116, H120, and H126.

This sequence belongs to the endoribonuclease YbeY family. It depends on Zn(2+) as a cofactor.

It localises to the cytoplasm. Its function is as follows. Single strand-specific metallo-endoribonuclease involved in late-stage 70S ribosome quality control and in maturation of the 3' terminus of the 16S rRNA. The polypeptide is Endoribonuclease YbeY (Renibacterium salmoninarum (strain ATCC 33209 / DSM 20767 / JCM 11484 / NBRC 15589 / NCIMB 2235)).